The primary structure comprises 544 residues: MPFDRDKLEELRSLAQRDFDRAWKEGAKLVREPGLRDRYPRLKVETGEPHPLFETIQQLREAYLRAGFREVVNPVIIPEEEVYKQFGPEAAAVLDRCFYLAGLPRPDVGLGADKVEKLAEVLGREPSEDEVERLRETLHAYKKGEIDGDELTHEIAEALDTDDGTAVRILDEVFPELKRLKPEPLEPPLTLRSHMTAGWFITLSEILKREDPPLKLFSIDRCFRREQREDESHLMTYHSASCVVVSDDVTVDTGKAVAEAILRQFGFEDFEFVPDEKMSKYYVPGTQTEVYAYHPDLEDSIEDEELGPGWVEIATFGLYSPVALAEYGIDYPVMNLGIGVERLCMVLHGIDDVRSLAYVEYEPWEPSDLELARMIDYERKPATSFGERLVREVVRGLHEHADEEGPVEVELFRGEFGDREVVVHAVEEEKGEPLAGPAAFNRVYVLDGNLYAVPPEGDFGREIREEGVYSGVSFEEGLAARLAYEVEELLATGGGETTVSVRKVSRPSQVNLSLPRKLLRYVTKKGGEIEIKGPVFVTLRAEVR.

Residues 194 to 196, 239 to 241, 281 to 282, and asparagine 335 contribute to the substrate site; these read HMT, SAS, and YY.

It belongs to the class-II aminoacyl-tRNA synthetase family. O-phosphoseryl-tRNA(Cys) synthetase subfamily. Homotetramer. Interacts with SepCysS.

The enzyme catalyses tRNA(Cys) + O-phospho-L-serine + ATP = O-phospho-L-seryl-tRNA(Cys) + AMP + diphosphate. In terms of biological role, catalyzes the attachment of O-phosphoserine (Sep) to tRNA(Cys). The sequence is that of O-phosphoserine--tRNA(Cys) ligase from Methanopyrus kandleri (strain AV19 / DSM 6324 / JCM 9639 / NBRC 100938).